Here is a 146-residue protein sequence, read N- to C-terminus: Phospholipase A2, membrane associated (146 aa).

An N-terminal signal peptide occupies residues 1–21 (MKVLLLLAVVIMAFGSIQVQG). 7 disulfide bridges follow: Cys47–Cys139, Cys49–Cys65, Cys64–Cys119, Cys70–Cys146, Cys71–Cys112, Cys80–Cys105, and Cys98–Cys110. Positions 48, 50, and 52 each coordinate Ca(2+). The active site involves His68. Asp69 provides a ligand contact to Ca(2+). Residue Asp113 is part of the active site.

Belongs to the phospholipase A2 family. Ca(2+) serves as cofactor.

The protein localises to the secreted. It is found in the cell membrane. The protein resides in the mitochondrion outer membrane. The catalysed reaction is a 1,2-diacyl-sn-glycero-3-phosphoethanolamine + H2O = a 1-acyl-sn-glycero-3-phosphoethanolamine + a fatty acid + H(+). The enzyme catalyses 1-hexadecanoyl-2-(9Z-octadecenoyl)-sn-glycero-3-phosphoethanolamine + H2O = 1-hexadecanoyl-sn-glycero-3-phosphoethanolamine + (9Z)-octadecenoate + H(+). It catalyses the reaction 1-hexadecanoyl-2-(9Z,12Z-octadecadienoyl)-sn-glycero-3-phosphoethanolamine + H2O = 1-hexadecanoyl-sn-glycero-3-phosphoethanolamine + (9Z,12Z)-octadecadienoate + H(+). It carries out the reaction 1-hexadecanoyl-2-(5Z,8Z,11Z,14Z-eicosatetraenoyl)-sn-glycero-3-phosphoethanolamine + H2O = 1-hexadecanoyl-sn-glycero-3-phosphoethanolamine + (5Z,8Z,11Z,14Z)-eicosatetraenoate + H(+). The catalysed reaction is N-hexadecanoyl-1,2-di-(9Z-octadecenoyl)-sn-glycero-3-phosphoethanolamine + H2O = N-hexadecanoyl-1-(9Z-octadecenoyl)-sn-glycero-3-phosphoethanolamine + (9Z)-octadecenoate + H(+). The enzyme catalyses 1,2-dihexadecanoyl-sn-glycero-3-phospho-(1'-sn-glycerol) + H2O = 1-hexadecanoyl-sn-glycero-3-phospho-(1'-sn-glycerol) + hexadecanoate + H(+). It catalyses the reaction 1-hexadecanoyl-2-(9Z-octadecenoyl)-sn-glycero-3-phosphoglycerol + H2O = 1-hexadecanoyl-sn-glycero-3-phosphoglycerol + (9Z)-octadecenoate + H(+). It carries out the reaction 1-hexadecanoyl-2-(9Z-octadecenoyl)-sn-glycero-3-phospho-(1'-sn-glycerol) + H2O = 1-hexadecanoyl-sn-glycero-3-phospho-(1'-sn-glycerol) + (9Z)-octadecenoate + H(+). The catalysed reaction is a 1,2-diacyl-sn-glycero-3-phosphocholine + H2O = a 1-acyl-sn-glycero-3-phosphocholine + a fatty acid + H(+). The enzyme catalyses 1,2-dihexadecanoyl-sn-glycero-3-phosphocholine + H2O = 1-hexadecanoyl-sn-glycero-3-phosphocholine + hexadecanoate + H(+). It catalyses the reaction 1-hexadecanoyl-2-(9Z-octadecenoyl)-sn-glycero-3-phosphocholine + H2O = 1-hexadecanoyl-sn-glycero-3-phosphocholine + (9Z)-octadecenoate + H(+). It carries out the reaction 1-hexadecanoyl-2-(9Z,12Z-octadecadienoyl)-sn-glycero-3-phosphocholine + H2O = (9Z,12Z)-octadecadienoate + 1-hexadecanoyl-sn-glycero-3-phosphocholine + H(+). The catalysed reaction is 1-hexadecanoyl-2-(4Z,7Z,10Z,13Z,16Z,19Z-docosahexaenoyl)-sn-glycero-3-phosphocholine + H2O = (4Z,7Z,10Z,13Z,16Z,19Z)-docosahexaenoate + 1-hexadecanoyl-sn-glycero-3-phosphocholine + H(+). Its function is as follows. Secretory calcium-dependent phospholipase A2 that primarily targets extracellular phospholipids with implications in host antimicrobial defense, inflammatory response and tissue regeneration. Hydrolyzes the ester bond of the fatty acyl group attached at sn-2 position of phospholipids (phospholipase A2 activity) with preference for phosphatidylethanolamines and phosphatidylglycerols over phosphatidylcholines. Contributes to lipid remodeling of cellular membranes and generation of lipid mediators involved in pathogen clearance. Displays bactericidal activity against Gram-positive bacteria by directly hydrolyzing phospholipids of the bacterial membrane. Upon sterile inflammation, targets membrane phospholipids of extracellular mitochondria released from activated platelets, generating free unsaturated fatty acids such as arachidonate that is used by neighboring leukocytes to synthesize inflammatory eicosanoids such as leukotrienes. Simultaneously, by compromising mitochondrial membrane integrity, promotes the release in circulation of potent damage-associated molecular pattern molecules that activate the innate immune response. Plays a stem cell regulator role in the intestinal crypt. Within intracellular compartment mediates Paneth cell differentiation and its stem cell supporting functions by inhibiting Wnt signaling pathway in intestinal stem cell (ICS). Secreted in the intestinal lumen upon inflammation, acts in an autocrine way and promotes prostaglandin E2 synthesis that stimulates Wnt signaling pathway in ICS cells and tissue regeneration. May play a role in the biosynthesis of N-acyl ethanolamines that regulate energy metabolism and inflammation. Hydrolyzes N-acyl phosphatidylethanolamines to N-acyl lysophosphatidylethanolamines, which are further cleaved by a lysophospholipase D to release N-acyl ethanolamines. Independent of its catalytic activity, acts as a ligand for integrins. Binds to and activates integrins ITGAV:ITGB3, ITGA4:ITGB1 and ITGA5:ITGB1. Binds to a site (site 2) which is distinct from the classical ligand-binding site (site 1) and induces integrin conformational changes and enhanced ligand binding to site 1. Induces cell proliferation in an integrin-dependent manner. This is Phospholipase A2, membrane associated (Pla2g2a) from Rattus norvegicus (Rat).